An 875-amino-acid polypeptide reads, in one-letter code: MKETKVQNTIAGAKGITFSGDTFVVPETHDMVKTLFDPMVRKSYCEMIILLILAANGLVFWLINNNTLRIETFIGLYIFWRLSYNFGIGYLLNVQSNHHRLVKWARKAQVFKKNGSLVSRLAEKEIKSQMGPEYDVQKYPIEFNTWLLFRKVVDLILMSDFTTFICLVVVCAINKDYQFINSDQQEVWLISTRLILGTVLILFNLWVKVNAHNTIKDYAWYWGDFFFRQINNEDLIFDGVFEMVPHPMYSVGYVGYYGFAIISKSYTILTVAIFGHFLQMIFLHYIENPHIDKIYGPSGNEADIEMLLKLKDLRHFDNIKPLVGLLNFTWLRASDMTNLIMVGTYSFTIPYLASLVDTVRVGETGVNPGTILFILTIVIKVFESLSINILLILQSYYKTFTKWYLSNDISVEKTLNNWSIMYNSLISLTYSSFFGLNFYHVLIGLESDKLFINSWVYLRIFLGILLVFTQVWINSSIIDSIGYFGWFYGDFFIPKTSQQKAHLTKAGVYRYLNNPEQIFGVCGIMGVTLIIPSLENLICCVLWVTNNFIRINFIEKAHMIKIYGEREVMKDSGVTKTFKKHLIPGAIQRRLSKGSEDNSDLLNQHRRKSTIMAGATDSLDNFIKELKNTNTRLTKQNILELSQNLYFENSDYKLVIKNLNTTENNLSTAFIGEPIEVEWKAPENHSPKDWIGLYKTVQTTYSRYKTLISSSDRWTQVTSDSGSYVFEGEKLFWEEGIYEFRYHLDGKHDVAYISEPFELTSANIEVPPSTEGSIVLANELKAKVFDRAIVGFGSIDSPIDSAVQKSGSIIQTYNRLAYVISKSTGIHINAKVFLYADNEDELTVHKLSLKLINIRKVLDDLSHAHYPLSEEKKEE.

Residues 1–42 are Lumenal-facing; the sequence is MKETKVQNTIAGAKGITFSGDTFVVPETHDMVKTLFDPMVRK. A helical membrane pass occupies residues 43-63; it reads SYCEMIILLILAANGLVFWLI. Topologically, residues 64 to 71 are cytoplasmic; it reads NNNTLRIE. A helical membrane pass occupies residues 72–92; it reads TFIGLYIFWRLSYNFGIGYLL. The Lumenal portion of the chain corresponds to 93-152; the sequence is NVQSNHHRLVKWARKAQVFKKNGSLVSRLAEKEIKSQMGPEYDVQKYPIEFNTWLLFRKV. A helical transmembrane segment spans residues 153–173; sequence VDLILMSDFTTFICLVVVCAI. The Cytoplasmic portion of the chain corresponds to 174-186; the sequence is NKDYQFINSDQQE. Residues 187–207 traverse the membrane as a helical segment; that stretch reads VWLISTRLILGTVLILFNLWV. Over 208–242 the chain is Lumenal; that stretch reads KVNAHNTIKDYAWYWGDFFFRQINNEDLIFDGVFE. A helical membrane pass occupies residues 243-263; the sequence is MVPHPMYSVGYVGYYGFAIIS. Residues 264–265 are Cytoplasmic-facing; the sequence is KS. A helical membrane pass occupies residues 266 to 286; sequence YTILTVAIFGHFLQMIFLHYI. Over 287–338 the chain is Lumenal; the sequence is ENPHIDKIYGPSGNEADIEMLLKLKDLRHFDNIKPLVGLLNFTWLRASDMTN. Residues 339-359 form a helical membrane-spanning segment; that stretch reads LIMVGTYSFTIPYLASLVDTV. Residues 360–370 lie on the Cytoplasmic side of the membrane; the sequence is RVGETGVNPGT. The chain crosses the membrane as a helical span at residues 371-391; it reads ILFILTIVIKVFESLSINILL. The Lumenal segment spans residues 392–424; it reads ILQSYYKTFTKWYLSNDISVEKTLNNWSIMYNS. A helical transmembrane segment spans residues 425–445; that stretch reads LISLTYSSFFGLNFYHVLIGL. Residues 446-459 lie on the Cytoplasmic side of the membrane; the sequence is ESDKLFINSWVYLR. The chain crosses the membrane as a helical span at residues 460–480; that stretch reads IFLGILLVFTQVWINSSIIDS. At 481–517 the chain is on the lumenal side; sequence IGYFGWFYGDFFIPKTSQQKAHLTKAGVYRYLNNPEQ. The helical transmembrane segment at 518 to 538 threads the bilayer; it reads IFGVCGIMGVTLIIPSLENLI. Residues 539 to 875 are Cytoplasmic-facing; it reads CCVLWVTNNF…YPLSEEKKEE (337 aa).

This sequence belongs to the class VI-like SAM-binding methyltransferase superfamily. CHO2 family.

It localises to the endoplasmic reticulum membrane. The enzyme catalyses a 1,2-diacyl-sn-glycero-3-phosphoethanolamine + S-adenosyl-L-methionine = a 1,2-diacyl-sn-glycero-3-phospho-N-methylethanolamine + S-adenosyl-L-homocysteine + H(+). It participates in phospholipid metabolism; phosphatidylcholine biosynthesis. Catalyzes the first step of the methylation pathway of phosphatidylcholine biosynthesis, the SAM-dependent methylation of phosphatidylethanolamine (PE) to phosphatidylmonomethylethanolamine (PMME). The sequence is that of Phosphatidylethanolamine N-methyltransferase (CHO2) from Debaryomyces hansenii (strain ATCC 36239 / CBS 767 / BCRC 21394 / JCM 1990 / NBRC 0083 / IGC 2968) (Yeast).